The chain runs to 162 residues: MSKKNSKNKAGSNTIALNRSARHEYFIEEKIEAGLSLQGWEVKSLRAGKANISEAYVIFRDGEAYLFGSSFLPLQAASSHVVCDPTRTRKLLLSRRELDKLESLIARQGYTVVPLALYWKQCWVKVEIGLVKGKKEHDKREDTKAREWDREKARIMKNKHRG.

Positions 137–154 (HDKREDTKAREWDREKAR) are enriched in basic and acidic residues. Positions 137 to 162 (HDKREDTKAREWDREKARIMKNKHRG) are disordered.

Belongs to the SmpB family.

It is found in the cytoplasm. Functionally, required for rescue of stalled ribosomes mediated by trans-translation. Binds to transfer-messenger RNA (tmRNA), required for stable association of tmRNA with ribosomes. tmRNA and SmpB together mimic tRNA shape, replacing the anticodon stem-loop with SmpB. tmRNA is encoded by the ssrA gene; the 2 termini fold to resemble tRNA(Ala) and it encodes a 'tag peptide', a short internal open reading frame. During trans-translation Ala-aminoacylated tmRNA acts like a tRNA, entering the A-site of stalled ribosomes, displacing the stalled mRNA. The ribosome then switches to translate the ORF on the tmRNA; the nascent peptide is terminated with the 'tag peptide' encoded by the tmRNA and targeted for degradation. The ribosome is freed to recommence translation, which seems to be the essential function of trans-translation. This Aeromonas hydrophila subsp. hydrophila (strain ATCC 7966 / DSM 30187 / BCRC 13018 / CCUG 14551 / JCM 1027 / KCTC 2358 / NCIMB 9240 / NCTC 8049) protein is SsrA-binding protein.